The sequence spans 259 residues: Phosphatidylglycerol--prolipoprotein diacylglyceryl transferase (259 aa).

The next 4 helical transmembrane spans lie at 9-29 (IGPF…VLAV), 47-67 (IDFI…YYVI), 83-103 (IWNG…VLFI), and 109-129 (VLNP…AQAI). A 1,2-diacyl-sn-glycero-3-phospho-(1'-sn-glycerol) is bound at residue R131. The next 3 membrane-spanning stretches (helical) occupy residues 167 to 187 (MPTF…ICYL), 194 to 214 (LLEG…RFVI), and 227 to 247 (LRVS…FVIL).

This sequence belongs to the Lgt family.

Its subcellular location is the cell membrane. The catalysed reaction is L-cysteinyl-[prolipoprotein] + a 1,2-diacyl-sn-glycero-3-phospho-(1'-sn-glycerol) = an S-1,2-diacyl-sn-glyceryl-L-cysteinyl-[prolipoprotein] + sn-glycerol 1-phosphate + H(+). The protein operates within protein modification; lipoprotein biosynthesis (diacylglyceryl transfer). In terms of biological role, catalyzes the transfer of the diacylglyceryl group from phosphatidylglycerol to the sulfhydryl group of the N-terminal cysteine of a prolipoprotein, the first step in the formation of mature lipoproteins. The sequence is that of Phosphatidylglycerol--prolipoprotein diacylglyceryl transferase from Streptococcus uberis (strain ATCC BAA-854 / 0140J).